Consider the following 227-residue polypeptide: (S)-2-haloacid dehalogenase 1 (227 aa).

Catalysis depends on Asp10, which acts as the Nucleophile. An (S)-2-haloacid-binding positions include 11 to 12 (AY), Arg41, and 118 to 119 (SN). Positions 175–180 (SSNAWD) are important for catalytic activity.

This sequence belongs to the HAD-like hydrolase superfamily. S-2-haloalkanoic acid dehalogenase family.

The catalysed reaction is an (S)-2-haloacid + H2O = a (2R)-2-hydroxycarboxylate + a halide anion + H(+). It catalyses the reaction (S)-2-chloropropanoate + H2O = (R)-lactate + chloride + H(+). In terms of biological role, catalyzes the hydrolytic dehalogenation of small (S)-2-haloalkanoic acids to yield the corresponding (R)-2-hydroxyalkanoic acids. Acts on acids of short chain lengths, C(2) to C(4), with inversion of configuration at C-2. Active with 2-halogenated carboxylic acids and converts only the S-isomer (or L-isomer) of 2-chloropropionic acid with inversion of configuration to produce R-lactate (or D-isomer). In Pseudomonas sp. (strain CBS-3), this protein is (S)-2-haloacid dehalogenase 1.